The chain runs to 770 residues: PH and SEC7 domain-containing protein 2 (770 aa).

A compositionally biased stretch (basic and acidic residues) spans 1–24 (MDEEKLPCELHKEGSATQEDHGLE). Disordered stretches follow at residues 1-65 (MDEE…RGPD) and 181-304 (IQQR…ANGC). Residues 32–45 (QNGTAASEGLSSHI) are compositionally biased toward polar residues. Serine 188 bears the Phosphoserine mark. Composition is skewed to low complexity over residues 216 to 234 (LGSP…NVLS) and 285 to 296 (ELSSSEGLEPGS). Residues 256-459 (DDEDDEDTDK…KTLYNSIKNE (204 aa)) enclose the SEC7 domain. Residues 509–622 (TTYKHGVLTR…WILRINLVAA (114 aa)) enclose the PH domain. Residues 619–636 (LVAAIFSAPAFPAAVSSM) traverse the membrane as a helical segment. Residues 650–677 (RLCQEEQLRSHENKLRQVTAELAEHRCH) adopt a coiled-coil conformation. The disordered stretch occupies residues 738 to 770 (PALRKTHSSPALSLGHGPVTGSKATKDTSASDT).

The protein belongs to the PSD family.

It is found in the cell membrane. It localises to the cell projection. The protein localises to the ruffle membrane. The protein resides in the cleavage furrow. The protein is PH and SEC7 domain-containing protein 2 (Psd2) of Mus musculus (Mouse).